A 341-amino-acid polypeptide reads, in one-letter code: HTH-type transcriptional repressor PurR (341 aa).

Residues 2–56 enclose the HTH lacI-type domain; that stretch reads ATIKDVAKRAGVSTTTVSHVINKTRFVAENTRAAVWAAIKELNYSPSAVARSLKV. The segment at residues 4-23 is a DNA-binding region (H-T-H motif); sequence IKDVAKRAGVSTTTVSHVIN. Residues 48–56 mediate DNA binding; it reads SAVARSLKV. The hypoxanthine site is built by Tyr-73, Arg-190, Thr-192, Phe-221, and Asp-275.

As to quaternary structure, homodimer.

The protein operates within purine metabolism; purine nucleotide biosynthesis [regulation]. Is the main repressor of the genes involved in the de novo synthesis of purine nucleotides, regulating purB, purC, purEK, purF, purHD, purL, purMN and guaBA expression. PurR is allosterically activated to bind its cognate DNA by binding the purine corepressors, hypoxanthine or guanine, thereby effecting transcription repression. In Proteus mirabilis (strain HI4320), this protein is HTH-type transcriptional repressor PurR.